The chain runs to 1126 residues: MGFNEFMTKLFGNKSQRDLKEITPYVDKVKAVYPSIKALSNDELRAKTDEIKQRIQDYVAEEKAQVEELRKGIEDKELEEREAIWAEVDKIEKAITDKMEVVLEQSLPEVFAIMKDTARRFAENEEVVVTANQFDRDLAARFDFVRIEDDKAIYANHWKAGGNEITWDMIHYDVQLFGGVVLHKGKIAEMATGEGKTLVATLPVFLNALTRNGVHVVTVNDYLSKRDSEWMGPLYMFHGLSVDCIDKHQPNSEARRKAYEADITFGTNNEFGFDYLRDNMAISPKDLVQRKHNYSIVDEVDSVLIDDARTPLIISGPIPRGEEQLFEQFRPNVEVVVNAQKDLCSKLLIEAKKKMASDDQKVVEEGSILLYRSFKGYPRNKALIKFLSEQGVKAQMLKTEEYFMSENMRHMHEATDELYFVIDEKNNSIELTDKGIDLLTGKTDDPTFFVLPDITSQLSQLENMTGTEEEKQAQKDEILANYSVKSERVHTINQLLKAYTLFEKDDEYVVMDNKVMIVDEQTGRIMDGRRYSDGLHQAIEAKERVKVEAATQTFATITLQNYFRMYHKLSGMTGTAETEAGEFWDIYKLDVVVIPTNRPIARNDMNDRIYKTKREKYNAVIEEIVQLTEAGRPVLVGTTSVEISELLSRMLTMRKIQHNVLNAKLHQKEAEIVALAGQKSTVTIATNMAGRGTDIKLSKDVKDAGGLAIIGTERHESRRVDRQLRGRAGRQGDPGSSVFFVSLEDDLMRLFASEKIAGLMDKLGFKEGEVLEHNMLSKSVERAQKKVEENNFGIRKRLLEYDDVMNSQRNVIYTRRRHALMGERIGLDVLNTIYDTSTAIADQHAEDFEGFKLELFKTFAMESPFTEDEFKSMKPEQLVEKLFEEALKTYKRRMERMTQVAHPVIKQVYENQGAMYENIMIPITDGKRMYNVSCNLKEAYDTECKAIVKSFQKSIVLHMIDEGWKEHLREMDELRHSVQNASYENKDPLLIYKLESYNLFKTMVDNMNRKTAAILMRGQIPVREEPTEEQRQAMQARQAAVAQQAAQAIAEERARQRIAVQEAAPEKHEDMSRYRTEKTDLSGNNTQAEAPQPKQAPVRAEKRVGRNDPCPCGSGKKYKNCHGQGL.

ATP-binding positions include Gln-175, 193–197, and Asp-694; that span reads GEGKT. Positions 1060–1126 are disordered; that stretch reads VQEAAPEKHE…KYKNCHGQGL (67 aa). The segment covering 1064–1080 has biased composition (basic and acidic residues); that stretch reads APEKHEDMSRYRTEKTD. Zn(2+)-binding residues include Cys-1110, Cys-1112, Cys-1121, and His-1122.

Belongs to the SecA family. Monomer and homodimer. Part of the essential Sec protein translocation apparatus which comprises SecA, SecYEG and auxiliary proteins SecDF. Other proteins may also be involved. Zn(2+) serves as cofactor.

It localises to the cell inner membrane. The protein localises to the cytoplasm. The enzyme catalyses ATP + H2O + cellular proteinSide 1 = ADP + phosphate + cellular proteinSide 2.. Part of the Sec protein translocase complex. Interacts with the SecYEG preprotein conducting channel. Has a central role in coupling the hydrolysis of ATP to the transfer of proteins into and across the cell membrane, serving as an ATP-driven molecular motor driving the stepwise translocation of polypeptide chains across the membrane. This chain is Protein translocase subunit SecA, found in Parabacteroides distasonis (strain ATCC 8503 / DSM 20701 / CIP 104284 / JCM 5825 / NCTC 11152).